Consider the following 580-residue polypeptide: Proline--tRNA ligase (580 aa).

The protein belongs to the class-II aminoacyl-tRNA synthetase family. ProS type 1 subfamily. Homodimer.

Its subcellular location is the cytoplasm. It catalyses the reaction tRNA(Pro) + L-proline + ATP = L-prolyl-tRNA(Pro) + AMP + diphosphate. Catalyzes the attachment of proline to tRNA(Pro) in a two-step reaction: proline is first activated by ATP to form Pro-AMP and then transferred to the acceptor end of tRNA(Pro). As ProRS can inadvertently accommodate and process non-cognate amino acids such as alanine and cysteine, to avoid such errors it has two additional distinct editing activities against alanine. One activity is designated as 'pretransfer' editing and involves the tRNA(Pro)-independent hydrolysis of activated Ala-AMP. The other activity is designated 'posttransfer' editing and involves deacylation of mischarged Ala-tRNA(Pro). The misacylated Cys-tRNA(Pro) is not edited by ProRS. The polypeptide is Proline--tRNA ligase (Mycobacteroides abscessus (strain ATCC 19977 / DSM 44196 / CCUG 20993 / CIP 104536 / JCM 13569 / NCTC 13031 / TMC 1543 / L948) (Mycobacterium abscessus)).